The sequence spans 236 residues: UPF0502 protein Bcep1808_3727 (236 aa).

Belongs to the UPF0502 family.

The protein is UPF0502 protein Bcep1808_3727 of Burkholderia vietnamiensis (strain G4 / LMG 22486) (Burkholderia cepacia (strain R1808)).